The primary structure comprises 20 residues: SVFAFENEQSSTIAPARLYK.

The segment at 1–20 (SVFAFENEQSSTIAPARLYK) is disordered.

Belongs to the BetVI family.

The chain is Protein PR-L2 from Lupinus luteus (European yellow lupine).